Reading from the N-terminus, the 372-residue chain is CXADR-like membrane protein (372 aa).

An N-terminal signal peptide occupies residues 1–17; that stretch reads MSLFFLWLVTYYVGTLG. Ig-like C2-type domains are found at residues 18–126 and 134–223; these read THTE…VILK and PKCE…VRVT. At 18 to 234 the chain is on the extracellular side; it reads THTEIKRVAE…QYVQSIGMVA (217 aa). 2 disulfides stabilise this stretch: Cys34–Cys110 and Cys152–Cys207. 2 N-linked (GlcNAc...) asparagine glycosylation sites follow: Asn73 and Asn196. Residues 235–255 traverse the membrane as a helical segment; it reads GAVTGIVAGALLIFLLIWLLI. Topologically, residues 256 to 372 are cytoplasmic; that stretch reads RRKSKERYEE…PSQSRAFQTV (117 aa). A compositionally biased stretch (basic and acidic residues) spans 263–280; it reads YEEEDRPNEIREDAEAPR. Residues 263–372 are disordered; that stretch reads YEEEDRPNEI…PSQSRAFQTV (110 aa). Composition is skewed to low complexity over residues 287-313 and 352-361; these read SSSS…ASRS and LTKAETTLST. Polar residues predominate over residues 362 to 372; it reads MPSQSRAFQTV.

Predominantly expressed in the white adipose tissue.

The protein localises to the cell junction. The protein resides in the tight junction. Its subcellular location is the cell membrane. Functionally, may be involved in the cell-cell adhesion. May play a role in adipocyte differentiation and development of obesity. Is required for normal small intestine development. This is CXADR-like membrane protein (Clmp) from Rattus norvegicus (Rat).